We begin with the raw amino-acid sequence, 170 residues long: 4-hydroxyphenylacetate 3-monooxygenase reductase component (170 aa).

Belongs to the non-flavoprotein flavin reductase family. HpaC subfamily. Monomer. HPA 3-hydroxylase consists of a reductase component HpaC and an oxygenase component HpaB. Some form of interactions between the reductase and the oxygenase facilitate the transfer of FADH(-) to the oxygenase in P.aeruginosa, although interactions are not required in other species.

It carries out the reaction FADH2 + NAD(+) = FAD + NADH + 2 H(+). Its pathway is aromatic compound metabolism; 4-hydroxyphenylacetate degradation; pyruvate and succinate semialdehyde from 4-hydroxyphenylacetate: step 1/7. With respect to regulation, the rate of FAD reduction is independent of the presence of HPA, demonstrating that, in contrast to HPAH from A.baumannii, the activity of the HPAH reductase is not allosterically regulated by the substrate. Reductase component of the 4-hydroxyphenylacetate (HPA) 3-hydroxylase. Catalyzes the reduction of FAD by NADH. The reduced flavin is then transferred to the oxygenase component HpaB. Is also able to reduce FMN and riboflavin, but preferentially binds FAD. Has no activity with NADPH as the reductant. This chain is 4-hydroxyphenylacetate 3-monooxygenase reductase component, found in Pseudomonas aeruginosa (strain ATCC 15692 / DSM 22644 / CIP 104116 / JCM 14847 / LMG 12228 / 1C / PRS 101 / PAO1).